The chain runs to 1342 residues: DNA-directed RNA polymerase subunit beta (1342 aa).

The protein belongs to the RNA polymerase beta chain family. As to quaternary structure, the RNAP catalytic core consists of 2 alpha, 1 beta, 1 beta' and 1 omega subunit. When a sigma factor is associated with the core the holoenzyme is formed, which can initiate transcription.

The catalysed reaction is RNA(n) + a ribonucleoside 5'-triphosphate = RNA(n+1) + diphosphate. Functionally, DNA-dependent RNA polymerase catalyzes the transcription of DNA into RNA using the four ribonucleoside triphosphates as substrates. This is DNA-directed RNA polymerase subunit beta from Yersinia enterocolitica serotype O:8 / biotype 1B (strain NCTC 13174 / 8081).